The primary structure comprises 248 residues: Ubiquinone/menaquinone biosynthesis C-methyltransferase UbiE (248 aa).

Positions 68 and 92 each coordinate S-adenosyl-L-methionine.

Belongs to the class I-like SAM-binding methyltransferase superfamily. MenG/UbiE family.

The catalysed reaction is a 2-demethylmenaquinol + S-adenosyl-L-methionine = a menaquinol + S-adenosyl-L-homocysteine + H(+). It carries out the reaction a 2-methoxy-6-(all-trans-polyprenyl)benzene-1,4-diol + S-adenosyl-L-methionine = a 5-methoxy-2-methyl-3-(all-trans-polyprenyl)benzene-1,4-diol + S-adenosyl-L-homocysteine + H(+). It functions in the pathway quinol/quinone metabolism; menaquinone biosynthesis; menaquinol from 1,4-dihydroxy-2-naphthoate: step 2/2. Its pathway is cofactor biosynthesis; ubiquinone biosynthesis. Its function is as follows. Methyltransferase required for the conversion of demethylmenaquinol (DMKH2) to menaquinol (MKH2) and the conversion of 2-polyprenyl-6-methoxy-1,4-benzoquinol (DDMQH2) to 2-polyprenyl-3-methyl-6-methoxy-1,4-benzoquinol (DMQH2). The protein is Ubiquinone/menaquinone biosynthesis C-methyltransferase UbiE of Rickettsia africae (strain ESF-5).